The primary structure comprises 91 residues: Lactococcin-B immunity protein (91 aa).

Its function is as follows. Imparts immunity to lactococcin-B to naturally sensitive host strains. The protein is Lactococcin-B immunity protein (lciB) of Lactococcus lactis subsp. cremoris (Streptococcus cremoris).